The primary structure comprises 375 residues: Neuropeptide Y receptor type 4 (375 aa).

The Extracellular portion of the chain corresponds to 1–39; that stretch reads MNTSHFLAPLFPGSLQGKNGTNPLDSPYNFSDGCQDSAE. Asn2, Asn19, and Asn29 each carry an N-linked (GlcNAc...) asparagine glycan. A helical membrane pass occupies residues 40–60; it reads LLAFIITTYSIETILGVLGNL. Residues 61–78 lie on the Cytoplasmic side of the membrane; sequence CLIFVTTRQKEKSNVTNL. A helical transmembrane segment spans residues 79 to 99; that stretch reads LIANLAFSDFLMCLICQPLTV. Residues 100–116 are Extracellular-facing; sequence TYTIMDYWIFGEVLCKM. Cysteines 114 and 201 form a disulfide. A helical membrane pass occupies residues 117–137; sequence LTFIQCMSVTVSILSLVLVAL. The Cytoplasmic segment spans residues 138–155; it reads ERHQLIINPTGWKPSIFQ. Residues 156 to 176 form a helical membrane-spanning segment; it reads AYLGIVVIWFVSCFLSLPFLA. The Extracellular portion of the chain corresponds to 177–211; that stretch reads NSTLNDLFHYNHSKVVEFLEDKVVCFVSWSSDHHR. A glycan (N-linked (GlcNAc...) asparagine) is linked at Asn187. The helical transmembrane segment at 212–232 threads the bilayer; the sequence is LIYTTFLLLFQYCIPLAFILV. At 233-266 the chain is on the cytoplasmic side; that stretch reads CYIRIYQRLQRQKHVFHAHACSSRAGQMKRINSM. Residues 267 to 287 traverse the membrane as a helical segment; sequence LMTMVTAFAVLWLPLHVFNTL. Over 288–301 the chain is Extracellular; the sequence is EDWYQEAIPACHGN. Residues 302–322 traverse the membrane as a helical segment; it reads LIFLMCHLLAMASTCVNPFIY. The Cytoplasmic segment spans residues 323–375; the sequence is GFLNINFKKDIKALVLTCHCRSPRGESEHLPLSTVHTDLSKGSMRMGSKSNFI. Cys340 carries the S-palmitoyl cysteine lipid modification.

This sequence belongs to the G-protein coupled receptor 1 family. As to expression, heart, detected in small intestine.

It localises to the cell membrane. In terms of biological role, g protein-coupled receptor for PPY/pancreatic polypeptide/PP that is negatively coupled to cAMP. Has much lower affinity for the NPY/neuropeptide Y and PYY/peptide YY. The chain is Neuropeptide Y receptor type 4 (Npy4r) from Mus musculus (Mouse).